The sequence spans 310 residues: tRNA dimethylallyltransferase (310 aa).

12–19 (GPTATGKT) lines the ATP pocket. 14-19 (TATGKT) is a substrate binding site. Residues 37 to 40 (DSMM) are interaction with substrate tRNA.

Belongs to the IPP transferase family. In terms of assembly, monomer. Mg(2+) is required as a cofactor.

The enzyme catalyses adenosine(37) in tRNA + dimethylallyl diphosphate = N(6)-dimethylallyladenosine(37) in tRNA + diphosphate. In terms of biological role, catalyzes the transfer of a dimethylallyl group onto the adenine at position 37 in tRNAs that read codons beginning with uridine, leading to the formation of N6-(dimethylallyl)adenosine (i(6)A). The chain is tRNA dimethylallyltransferase from Desulforudis audaxviator (strain MP104C).